A 380-amino-acid polypeptide reads, in one-letter code: Pregnancy-associated glycoprotein 4 (380 aa).

Residues 1 to 15 form the signal peptide; sequence MKWLVLLGLVAFSEC. Positions 16–53 are cleaved as a propeptide — activation peptide; it reads IFKIPLRRVKTMRKTLSGKNMLNDVLKEHPYRLPQISF. Positions 71-377 constitute a Peptidase A1 domain; the sequence is YVGNITIGTP…DRGNDRIGLA (307 aa). Asparagine 74 is a glycosylation site (N-linked (GlcNAc...) asparagine). Aspartate 89 is a catalytic residue. Residues cysteine 102 and cysteine 107 are joined by a disulfide bond. Asparagine 125 carries an N-linked (GlcNAc...) asparagine glycan. Residues cysteine 261 and cysteine 265 are joined by a disulfide bond. Aspartate 270 is an active-site residue. Cysteine 303 and cysteine 337 are disulfide-bonded.

The protein belongs to the peptidase A1 family. As to expression, trophoblast and placental tissue. Produced specifically in the invasive binucleate cells of the placenta.

It is found in the secreted. The protein resides in the extracellular space. This chain is Pregnancy-associated glycoprotein 4, found in Ovis aries (Sheep).